The following is a 277-amino-acid chain: Large ribosomal subunit protein uL2 (277 aa).

The interval 219-277 (TVRGSVMNPNDHPHGGGEGKAPVGRKAPSTPWGKPALGLKTRNKKAKSNKLIVRRRNEK) is disordered. Positions 259–277 (TRNKKAKSNKLIVRRRNEK) are enriched in basic residues.

It belongs to the universal ribosomal protein uL2 family. Part of the 50S ribosomal subunit. Forms a bridge to the 30S subunit in the 70S ribosome.

Its function is as follows. One of the primary rRNA binding proteins. Required for association of the 30S and 50S subunits to form the 70S ribosome, for tRNA binding and peptide bond formation. It has been suggested to have peptidyltransferase activity; this is somewhat controversial. Makes several contacts with the 16S rRNA in the 70S ribosome. In Streptococcus equi subsp. zooepidemicus (strain MGCS10565), this protein is Large ribosomal subunit protein uL2.